Here is a 323-residue protein sequence, read N- to C-terminus: CIMIP2 protein CG18335 (323 aa).

The protein belongs to the CIMIP2 family.

The protein localises to the cytoplasm. It is found in the cytoskeleton. It localises to the cilium axoneme. Its function is as follows. Probable microtubule inner protein (MIP) part of the dynein-decorated doublet microtubules (DMTs) in cilium axoneme. This Drosophila melanogaster (Fruit fly) protein is CIMIP2 protein CG18335.